The chain runs to 489 residues: 3-octaprenyl-4-hydroxybenzoate carboxy-lyase (489 aa).

A Mn(2+)-binding site is contributed by Asn-172. Residues 175 to 177, 189 to 191, and 194 to 195 contribute to the prenylated FMN site; these read IYR, RWL, and RG. Residue Glu-238 coordinates Mn(2+). Asp-287 functions as the Proton donor in the catalytic mechanism.

The protein belongs to the UbiD family. As to quaternary structure, homohexamer. Requires prenylated FMN as cofactor. Mn(2+) is required as a cofactor.

It localises to the cell membrane. The catalysed reaction is a 4-hydroxy-3-(all-trans-polyprenyl)benzoate + H(+) = a 2-(all-trans-polyprenyl)phenol + CO2. The protein operates within cofactor biosynthesis; ubiquinone biosynthesis. Functionally, catalyzes the decarboxylation of 3-octaprenyl-4-hydroxy benzoate to 2-octaprenylphenol, an intermediate step in ubiquinone biosynthesis. This chain is 3-octaprenyl-4-hydroxybenzoate carboxy-lyase, found in Aeromonas salmonicida (strain A449).